Consider the following 248-residue polypeptide: 4-hydroxy-tetrahydrodipicolinate reductase (248 aa).

Residues 9-14 (GAKGRV), 77-79 (GTT), and 104-107 (APNF) each bind NAD(+). Catalysis depends on His134, which acts as the Proton donor/acceptor. His135 contributes to the (S)-2,3,4,5-tetrahydrodipicolinate binding site. Catalysis depends on Lys138, which acts as the Proton donor. Residue 144-145 (GT) participates in (S)-2,3,4,5-tetrahydrodipicolinate binding.

It belongs to the DapB family.

It is found in the cytoplasm. It carries out the reaction (S)-2,3,4,5-tetrahydrodipicolinate + NAD(+) + H2O = (2S,4S)-4-hydroxy-2,3,4,5-tetrahydrodipicolinate + NADH + H(+). The enzyme catalyses (S)-2,3,4,5-tetrahydrodipicolinate + NADP(+) + H2O = (2S,4S)-4-hydroxy-2,3,4,5-tetrahydrodipicolinate + NADPH + H(+). The protein operates within amino-acid biosynthesis; L-lysine biosynthesis via DAP pathway; (S)-tetrahydrodipicolinate from L-aspartate: step 4/4. In terms of biological role, catalyzes the conversion of 4-hydroxy-tetrahydrodipicolinate (HTPA) to tetrahydrodipicolinate. The chain is 4-hydroxy-tetrahydrodipicolinate reductase from Corynebacterium aurimucosum (strain ATCC 700975 / DSM 44827 / CIP 107346 / CN-1) (Corynebacterium nigricans).